The following is a 158-amino-acid chain: NADPH-dependent 7-cyano-7-deazaguanine reductase (158 aa).

Catalysis depends on cysteine 56, which acts as the Thioimide intermediate. Aspartate 63 serves as the catalytic Proton donor. Residues 78 to 80 and 97 to 98 each bind substrate; these read VES and HE.

The protein belongs to the GTP cyclohydrolase I family. QueF type 1 subfamily.

Its subcellular location is the cytoplasm. The catalysed reaction is 7-aminomethyl-7-carbaguanine + 2 NADP(+) = 7-cyano-7-deazaguanine + 2 NADPH + 3 H(+). Its pathway is tRNA modification; tRNA-queuosine biosynthesis. Functionally, catalyzes the NADPH-dependent reduction of 7-cyano-7-deazaguanine (preQ0) to 7-aminomethyl-7-deazaguanine (preQ1). The protein is NADPH-dependent 7-cyano-7-deazaguanine reductase of Rhodopseudomonas palustris (strain HaA2).